Consider the following 547-residue polypeptide: Nitrosoguanidine resistance protein SNG1 (547 aa).

The segment at N35–L86 is disordered. Positions K50–P62 are enriched in basic and acidic residues. Phosphothreonine is present on T91. The next 8 membrane-spanning stretches (helical) occupy residues F109–G129, I159–A179, I318–L338, L363–F383, G394–N414, L418–I438, Y457–L477, and I488–G508. Low complexity predominate over residues A526–A536. A disordered region spans residues A526–N547.

It to yeast YJR015W.

It is found in the membrane. May function as a N-methyl-N'nitro-N-nitrosoguanidine (MNNG) export permease. The protein is Nitrosoguanidine resistance protein SNG1 (SNG1) of Saccharomyces cerevisiae (strain ATCC 204508 / S288c) (Baker's yeast).